Here is a 3164-residue protein sequence, read N- to C-terminus: Protein eyes shut homolog (3164 aa).

Residues 1–21 (MTDKSIIILSLMVFHSSFING) form the signal peptide. Asparagine 42, asparagine 105, asparagine 117, and asparagine 166 each carry an N-linked (GlcNAc...) asparagine glycan. EGF-like domains lie at 170–212 (KQQF…KYCQ), 213–254 (ELDA…KNCS), and 256–292 (IIGQ…PFCE). Intrachain disulfides connect cysteine 174-cysteine 189, cysteine 183-cysteine 200, cysteine 202-cysteine 211, cysteine 217-cysteine 228, cysteine 222-cysteine 242, cysteine 244-cysteine 253, cysteine 260-cysteine 270, cysteine 265-cysteine 280, and cysteine 282-cysteine 291. 4 N-linked (GlcNAc...) asparagine glycosylation sites follow: asparagine 225, asparagine 252, asparagine 269, and asparagine 272. Asparagine 311 and asparagine 343 each carry an N-linked (GlcNAc...) asparagine glycan. EGF-like domains are found at residues 332 to 368 (DVSE…LLCK) and 370 to 406 (IQTS…KNCE). 5 disulfides stabilise this stretch: cysteine 336-cysteine 347, cysteine 341-cysteine 356, cysteine 358-cysteine 367, cysteine 374-cysteine 385, and cysteine 396-cysteine 405. Residue asparagine 382 is glycosylated (N-linked (GlcNAc...) asparagine). Asparagine 506, asparagine 521, and asparagine 566 each carry an N-linked (GlcNAc...) asparagine glycan. The EGF-like 6 domain maps to 567–602 (TTDDQENECQHEAICKDEINRPRCSCSLSYIGRLCV). Intrachain disulfides connect cysteine 575–cysteine 590 and cysteine 592–cysteine 601. Residues asparagine 611 and asparagine 654 are each glycosylated (N-linked (GlcNAc...) asparagine). In terms of domain architecture, EGF-like 7 spans 643 to 679 (DTEDCKSVSCKNGTTSIHLRGYFFCKCVPGFKGTQRE). 6 disulfides stabilise this stretch: cysteine 652–cysteine 667, cysteine 685–cysteine 696, cysteine 690–cysteine 705, cysteine 707–cysteine 719, cysteine 737–cysteine 748, and cysteine 742–cysteine 757. The EGF-like 8; calcium-binding domain occupies 681-720 (DIDECASHPCKNGATCIDQPGNYFCQCVPPFKVVDGFSCL). One can recognise an EGF-like 9; calcium-binding domain in the interval 733–769 (DIDDCILNACEHNSTCKDLHLSYQCVCLSGWEGNFSE). N-linked (GlcNAc...) asparagine glycosylation is found at asparagine 745, asparagine 766, asparagine 782, asparagine 783, and asparagine 805. The 37-residue stretch at 771–807 (ESNECKMNPCKNNSTCIDLYKSYRCECTSGWTGQNCS) folds into the EGF-like 10; calcium-binding domain. Disulfide bonds link cysteine 775/cysteine 786, cysteine 780/cysteine 795, cysteine 797/cysteine 806, cysteine 813/cysteine 824, cysteine 818/cysteine 835, cysteine 837/cysteine 846, cysteine 853/cysteine 866, cysteine 860/cysteine 876, cysteine 878/cysteine 887, cysteine 894/cysteine 905, cysteine 899/cysteine 914, cysteine 916/cysteine 925, cysteine 932/cysteine 943, cysteine 937/cysteine 952, cysteine 954/cysteine 963, cysteine 970/cysteine 981, cysteine 975/cysteine 990, cysteine 992/cysteine 1001, cysteine 1008/cysteine 1019, cysteine 1013/cysteine 1028, cysteine 1030/cysteine 1039, cysteine 1046/cysteine 1056, cysteine 1051/cysteine 1065, cysteine 1067/cysteine 1076, cysteine 1083/cysteine 1094, cysteine 1088/cysteine 1103, cysteine 1105/cysteine 1114, cysteine 1121/cysteine 1137, cysteine 1131/cysteine 1147, cysteine 1149/cysteine 1158, cysteine 1165/cysteine 1176, cysteine 1170/cysteine 1185, and cysteine 1187/cysteine 1196. 3 consecutive EGF-like domains span residues 809-847 (EINE…RFCH), 849-888 (RYNP…KNCE), and 890-926 (DVKE…SLCE). Asparagine 862 and asparagine 863 each carry an N-linked (GlcNAc...) asparagine glycan. Positions 928 to 964 (EINECSSEPCKNNGTCVDLTNRFFCNCEPGYHGPFCE) constitute an EGF-like 14; calcium-binding domain. Asparagine 940 is a glycosylation site (N-linked (GlcNAc...) asparagine). The region spanning 966 to 1002 (DVNKCKISPCLDEENCVYRTDGYNCLCAPGYTGINCE) is the EGF-like 15 domain. An EGF-like 16; calcium-binding domain is found at 1004–1040 (NLDECLSEPCLHDGVCIDGINHYTCDCKSGFFGTHCE). EGF-like domains are found at residues 1042–1077 (NAND…TQCK), 1079–1115 (KIND…AYCE), and 1117–1159 (SIDN…QFCE). The EGF-like 20; calcium-binding domain maps to 1161 to 1197 (NINECSSSPCLHGADCEDHINGYVCKCQPGWSGHHCE). Asparagine 1509, asparagine 1522, asparagine 1906, asparagine 1941, asparagine 1960, and asparagine 2033 each carry an N-linked (GlcNAc...) asparagine glycan. Positions 1883–2063 (FSCVRYYGDS…AVKNYHINNC (181 aa)) constitute a Laminin G-like 1 domain. Cystine bridges form between cysteine 2037/cysteine 2063, cysteine 2103/cysteine 2114, cysteine 2108/cysteine 2128, and cysteine 2130/cysteine 2139. The region spanning 2099–2140 (APSVCQQDVCHNGGTCHPIFLSRGIVSFQCDCPLHFTGRFCE) is the EGF-like 21 domain. In terms of domain architecture, Laminin G-like 2 spans 2145–2339 (LFFPSFNGNS…NIENCHVPWC (195 aa)). Asparagine 2170, asparagine 2185, and asparagine 2228 each carry an N-linked (GlcNAc...) asparagine glycan. 6 disulfides stabilise this stretch: cysteine 2308–cysteine 2339, cysteine 2339–cysteine 2350, cysteine 2344–cysteine 2359, cysteine 2375–cysteine 2386, cysteine 2380–cysteine 2396, and cysteine 2398–cysteine 2407. EGF-like domains are found at residues 2335–2368 (HVPW…YSGK) and 2371–2408 (QFAS…PLCT). N-linked (GlcNAc...) asparagine glycosylation occurs at asparagine 2347. N-linked (GlcNAc...) asparagine glycans are attached at residues asparagine 2412, asparagine 2453, asparagine 2484, asparagine 2506, and asparagine 2532. In terms of domain architecture, Laminin G-like 3 spans 2419–2609 (SGTDAFGYTS…PNAGRSVGQC (191 aa)). 3 cysteine pairs are disulfide-bonded: cysteine 2576-cysteine 2609, cysteine 2614-cysteine 2625, and cysteine 2619-cysteine 2634. 2 consecutive EGF-like domains span residues 2610–2646 (HASP…AFCT) and 2648–2689 (TVST…IYCE). Asparagine 2635 carries an N-linked (GlcNAc...) asparagine glycan. Cystine bridges form between cysteine 2636–cysteine 2645, cysteine 2652–cysteine 2668, cysteine 2662–cysteine 2677, and cysteine 2679–cysteine 2688. The 179-residue stretch at 2717–2895 (DPSFRSNELS…AKGGSNVGDC (179 aa)) folds into the Laminin G-like 4 domain. N-linked (GlcNAc...) asparagine glycans are attached at residues asparagine 2775, asparagine 2800, and asparagine 2824. 4 disulfide bridges follow: cysteine 2868-cysteine 2895, cysteine 2900-cysteine 2911, cysteine 2905-cysteine 2920, and cysteine 2922-cysteine 2931. 2 consecutive EGF-like domains span residues 2896 to 2932 (DGTA…NTCN) and 2933 to 2970 (QSVY…RYCE). Asparagine 2914 is a glycosylation site (N-linked (GlcNAc...) asparagine). N-linked (GlcNAc...) asparagine glycosylation occurs at asparagine 2932. 3 disulfide bridges follow: cysteine 2937/cysteine 2948, cysteine 2942/cysteine 2958, and cysteine 2960/cysteine 2969. Residue asparagine 2951 is glycosylated (N-linked (GlcNAc...) asparagine). N-linked (GlcNAc...) asparagine glycosylation is found at asparagine 2971, asparagine 3006, asparagine 3036, asparagine 3057, asparagine 3073, and asparagine 3082. The Laminin G-like 5 domain occupies 2975 to 3164 (FSTAKFMGNS…YDGDEQNEVT (190 aa)).

It belongs to the EYS family.

It is found in the cell projection. The protein resides in the cilium. The protein localises to the photoreceptor outer segment. It localises to the cytoplasm. Its subcellular location is the cytoskeleton. It is found in the cilium axoneme. The protein resides in the microtubule organizing center. The protein localises to the centrosome. It localises to the secreted. Its subcellular location is the extracellular space. It is found in the extracellular matrix. The protein resides in the interphotoreceptor matrix. Required to maintain the integrity of photoreceptor cells. Specifically required for normal morphology of the photoreceptor ciliary pocket, and might thus facilitate protein trafficking between the photoreceptor inner and outer segments via the transition zone. The protein is Protein eyes shut homolog (EYS) of Pongo abelii (Sumatran orangutan).